The sequence spans 181 residues: Epidermin decarboxylase (181 aa).

H67 is a catalytic residue.

Belongs to the HFCD (homooligomeric flavin containing Cys decarboxylase) superfamily. As to quaternary structure, homododecamer. FMN is required as a cofactor.

In terms of biological role, catalyzes the removal of two reducing equivalents (oxidative decarboxylation) from the cysteine residue of the C-terminal meso-lanthionine of epidermin to form a --C==C-- double bond. This is Epidermin decarboxylase (epiD) from Staphylococcus epidermidis.